We begin with the raw amino-acid sequence, 117 residues long: Immunoglobulin heavy variable 1-3 (117 aa).

The N-terminal stretch at 1-19 is a signal peptide; sequence MDWTWRILFLVAAATGAHS. The segment at 20–44 is framework-1; sequence QVQLVQSGAEVKKPGASVKVSCKAS. The 98-residue stretch at 20 to 117 folds into the Ig-like domain; it reads QVQLVQSGAE…EDTAVYYCAR (98 aa). A disulfide bridge connects residues cysteine 41 and cysteine 115. Residues 45-52 form a complementarity-determining-1 region; sequence GYTFTSYA. Residues 53–69 are framework-2; the sequence is MHWVRQAPGQRLEWMGW. A complementarity-determining-2 region spans residues 70-77; the sequence is INAGNGNT. Positions 78-115 are framework-3; sequence KYSQKFQGRVTITRDTSASTAYMELSSLRSEDTAVYYC. Residues 116-117 are complementarity-determining-3; it reads AR.

In terms of assembly, immunoglobulins are composed of two identical heavy chains and two identical light chains; disulfide-linked.

It is found in the secreted. It localises to the cell membrane. Its function is as follows. V region of the variable domain of immunoglobulin heavy chains that participates in the antigen recognition. Immunoglobulins, also known as antibodies, are membrane-bound or secreted glycoproteins produced by B lymphocytes. In the recognition phase of humoral immunity, the membrane-bound immunoglobulins serve as receptors which, upon binding of a specific antigen, trigger the clonal expansion and differentiation of B lymphocytes into immunoglobulins-secreting plasma cells. Secreted immunoglobulins mediate the effector phase of humoral immunity, which results in the elimination of bound antigens. The antigen binding site is formed by the variable domain of one heavy chain, together with that of its associated light chain. Thus, each immunoglobulin has two antigen binding sites with remarkable affinity for a particular antigen. The variable domains are assembled by a process called V-(D)-J rearrangement and can then be subjected to somatic hypermutations which, after exposure to antigen and selection, allow affinity maturation for a particular antigen. This Homo sapiens (Human) protein is Immunoglobulin heavy variable 1-3.